The primary structure comprises 126 residues: UPF0102 protein Cphamn1_0017 (126 aa).

Belongs to the UPF0102 family.

This chain is UPF0102 protein Cphamn1_0017, found in Chlorobium phaeobacteroides (strain BS1).